A 215-amino-acid polypeptide reads, in one-letter code: Large ribosomal subunit protein bL25 (215 aa).

2 stretches are compositionally biased toward polar residues: residues 1–19 (MAKS…NTGK) and 206–215 (ENKTAATESE). 2 disordered regions span residues 1–29 (MAKS…RRDG) and 190–215 (AKYA…TESE).

It belongs to the bacterial ribosomal protein bL25 family. CTC subfamily. Part of the 50S ribosomal subunit; part of the 5S rRNA/L5/L18/L25 subcomplex. Contacts the 5S rRNA. Binds to the 5S rRNA independently of L5 and L18.

Its function is as follows. This is one of the proteins that binds to the 5S RNA in the ribosome where it forms part of the central protuberance. The chain is Large ribosomal subunit protein bL25 from Mycobacterium leprae (strain TN).